A 612-amino-acid polypeptide reads, in one-letter code: tRNA(Met) cytidine acetyltransferase TmcA (612 aa).

ATP contacts are provided by residues glutamine 136, 161 to 170 (GRGKSTLLGQ), and arginine 284. In terms of domain architecture, N-acetyltransferase spans 319–499 (KHASELEEAL…PAAIYALPLT (181 aa)). 424 to 426 (IAV) serves as a coordination point for acetyl-CoA.

This sequence belongs to the RNA cytidine acetyltransferase family. TmcA subfamily.

Its subcellular location is the cytoplasm. The catalysed reaction is cytidine(34) in elongator tRNA(Met) + acetyl-CoA + ATP + H2O = N(4)-acetylcytidine(34) in elongator tRNA(Met) + ADP + phosphate + CoA + H(+). Its function is as follows. Catalyzes the formation of N(4)-acetylcytidine (ac(4)C) at the wobble position of tRNA(Met), by using acetyl-CoA as an acetyl donor and ATP (or GTP). This chain is tRNA(Met) cytidine acetyltransferase TmcA, found in Idiomarina loihiensis (strain ATCC BAA-735 / DSM 15497 / L2-TR).